The following is a 291-amino-acid chain: Ribosomal RNA small subunit methyltransferase I (291 aa).

It belongs to the methyltransferase superfamily. RsmI family.

The protein localises to the cytoplasm. It carries out the reaction cytidine(1402) in 16S rRNA + S-adenosyl-L-methionine = 2'-O-methylcytidine(1402) in 16S rRNA + S-adenosyl-L-homocysteine + H(+). Functionally, catalyzes the 2'-O-methylation of the ribose of cytidine 1402 (C1402) in 16S rRNA. This is Ribosomal RNA small subunit methyltransferase I from Neisseria meningitidis serogroup B (strain ATCC BAA-335 / MC58).